A 557-amino-acid polypeptide reads, in one-letter code: Urease subunit alpha (557 aa).

Positions 130 to 557 (GFIDTHIHWV…LPLTQLYFIY (428 aa)) constitute a Urease domain. Ni(2+) contacts are provided by His-135, His-137, and Lys-217. The residue at position 217 (Lys-217) is an N6-carboxylysine. His-219 is a substrate binding site. Residues His-246 and His-272 each coordinate Ni(2+). His-320 acts as the Proton donor in catalysis. Residue Asp-360 coordinates Ni(2+).

This sequence belongs to the metallo-dependent hydrolases superfamily. Urease alpha subunit family. Heterohexamer of 3 UreC (alpha) and 3 UreAB (gamma/beta) subunits. The cofactor is Ni cation. In terms of processing, carboxylation allows a single lysine to coordinate two nickel ions.

Its subcellular location is the cytoplasm. The catalysed reaction is urea + 2 H2O + H(+) = hydrogencarbonate + 2 NH4(+). Its pathway is nitrogen metabolism; urea degradation; CO(2) and NH(3) from urea (urease route): step 1/1. This is Urease subunit alpha from Sulfurisphaera tokodaii (strain DSM 16993 / JCM 10545 / NBRC 100140 / 7) (Sulfolobus tokodaii).